Consider the following 322-residue polypeptide: Cytochrome f (322 aa).

The first 35 residues, 1–35, serve as a signal peptide directing secretion; the sequence is MQNRNIFSWVKEQTTRSISVSIMILIYVITWTSIS. Heme contacts are provided by tyrosine 38, cysteine 58, cysteine 61, and histidine 62. Residues 288–308 form a helical membrane-spanning segment; that stretch reads VQGLFFFFASVILAQIFLVLK.

This sequence belongs to the cytochrome f family. As to quaternary structure, the 4 large subunits of the cytochrome b6-f complex are cytochrome b6, subunit IV (17 kDa polypeptide, petD), cytochrome f and the Rieske protein, while the 4 small subunits are PetG, PetL, PetM and PetN. The complex functions as a dimer. Heme is required as a cofactor.

The protein localises to the plastid. The protein resides in the chloroplast thylakoid membrane. Component of the cytochrome b6-f complex, which mediates electron transfer between photosystem II (PSII) and photosystem I (PSI), cyclic electron flow around PSI, and state transitions. The protein is Cytochrome f of Nandina domestica (Heavenly bamboo).